Reading from the N-terminus, the 29-residue chain is Lambda-theraphotoxin-Ec2b (29 aa).

3 disulfide bridges follow: cysteine 2–cysteine 16, cysteine 9–cysteine 21, and cysteine 15–cysteine 25.

The protein belongs to the neurotoxin 30 (phrixotoxin) family. As to expression, expressed by the venom gland.

Its subcellular location is the secreted. Its function is as follows. Insect-selective neurotoxin that potently blocks insect calcium-activated potassium (BKCa) channels (Slo-type) in cockroach dorsal unpaired median (DUM) neurons (IC(50)=25.3 nM). This occurs in the absence of any shifts in the voltage dependence of activation. May interact with the turret and/or loop region of the external entrance to the channel and does not project deeply into the pore of the channel. In vivo, does not show toxicity in mice after intracerebroventricular injection of up to 25 pmol/g (1.8 ug/20 g mouse). This chain is Lambda-theraphotoxin-Ec2b, found in Eucratoscelus constrictus (African red-rump baboon spider).